A 200-amino-acid polypeptide reads, in one-letter code: Cytochrome c biogenesis ATP-binding export protein CcmA (200 aa).

Residues 3–200 (LSGRGLRCVR…AREMRIGAAA (198 aa)) enclose the ABC transporter domain. Residue 35–42 (GHNGAGKT) participates in ATP binding.

This sequence belongs to the ABC transporter superfamily. CcmA exporter (TC 3.A.1.107) family. In terms of assembly, the complex is composed of two ATP-binding proteins (CcmA) and two transmembrane proteins (CcmB).

The protein localises to the cell inner membrane. It carries out the reaction heme b(in) + ATP + H2O = heme b(out) + ADP + phosphate + H(+). Part of the ABC transporter complex CcmAB involved in the biogenesis of c-type cytochromes; once thought to export heme, this seems not to be the case, but its exact role is uncertain. Responsible for energy coupling to the transport system. In Rhodopseudomonas palustris (strain BisB5), this protein is Cytochrome c biogenesis ATP-binding export protein CcmA.